A 232-amino-acid chain; its full sequence is MIRLGVNIDHVATLRNARGGTFPDPVAAAELAIASGADGITAHLREDRRHIRDADMPRLRALSAPLNFEMAATDEMVRIACDLRPHACCLVPEKRQEVTTEGGLDIVGQSEALKPKIARLRDAGIRVSLFIDPEARQIETAAALGAPVVELHTGAYALGGSEELERLRSAAGTVAACGLELHAGHGLTYDNVGAIADLTGLAELNIGHFLIGQAIFDGLGPVVRKMKSLINS.

Residue asparagine 7 participates in 3-amino-2-oxopropyl phosphate binding. 9–10 (DH) provides a ligand contact to 1-deoxy-D-xylulose 5-phosphate. Arginine 18 provides a ligand contact to 3-amino-2-oxopropyl phosphate. Histidine 43 serves as the catalytic Proton acceptor. Residues arginine 45 and histidine 50 each coordinate 1-deoxy-D-xylulose 5-phosphate. Glutamate 69 acts as the Proton acceptor in catalysis. 1-deoxy-D-xylulose 5-phosphate is bound at residue threonine 99. Histidine 185 serves as the catalytic Proton donor. Residues glycine 186 and 207-208 (GH) contribute to the 3-amino-2-oxopropyl phosphate site.

It belongs to the PNP synthase family. In terms of assembly, homooctamer; tetramer of dimers.

It is found in the cytoplasm. The enzyme catalyses 3-amino-2-oxopropyl phosphate + 1-deoxy-D-xylulose 5-phosphate = pyridoxine 5'-phosphate + phosphate + 2 H2O + H(+). It functions in the pathway cofactor biosynthesis; pyridoxine 5'-phosphate biosynthesis; pyridoxine 5'-phosphate from D-erythrose 4-phosphate: step 5/5. Its function is as follows. Catalyzes the complicated ring closure reaction between the two acyclic compounds 1-deoxy-D-xylulose-5-phosphate (DXP) and 3-amino-2-oxopropyl phosphate (1-amino-acetone-3-phosphate or AAP) to form pyridoxine 5'-phosphate (PNP) and inorganic phosphate. The protein is Pyridoxine 5'-phosphate synthase of Gluconobacter oxydans (strain 621H) (Gluconobacter suboxydans).